Reading from the N-terminus, the 204-residue chain is LexA repressor (204 aa).

The segment at residues 29 to 49 (VREIGDAVGLMSSSTVHGHLQ) is a DNA-binding region (H-T-H motif). Active-site for autocatalytic cleavage activity residues include S127 and K164.

Belongs to the peptidase S24 family. Homodimer.

It catalyses the reaction Hydrolysis of Ala-|-Gly bond in repressor LexA.. Its function is as follows. Represses a number of genes involved in the response to DNA damage (SOS response), including recA and lexA. In the presence of single-stranded DNA, RecA interacts with LexA causing an autocatalytic cleavage which disrupts the DNA-binding part of LexA, leading to derepression of the SOS regulon and eventually DNA repair. The protein is LexA repressor of Desulfitobacterium hafniense (strain DSM 10664 / DCB-2).